We begin with the raw amino-acid sequence, 458 residues long: MGSIQIIFAAYCVVLCVLQMLVLSSEQFTITGLERPVLAPLGGILELSCQLSPPQNAQQMEIRWFRNRYTEPVYLYRNGKDLHGETISKYVERTELLKHDIGKGKVTLRVFKVTVDDDGSYHCVFKDGIFYEEHITEVKVTATSSDIKIIMHPPNIKGVMLECHSRGWFPQPHMEWRDSNGQVIPATSKSQSQDENKLFNMTMNLFADVGLHQIVTCYIQNLLTHQEESISIVLTGDLFSWKIDWILILSIIACVMIPYSMTSYLQQHLIHGSCSQRSHHWRKNAMVCMSSVIAIIGSMLILHLKQRVPISDQHFELDTLYLEDISVILCVVIVFNLKLNLLTYYRLERKYDGCTPGCKACFYILKIIIIILPFVFTFGCYNAIFLKYHQLQKKVSIPDPLYYFYTSWLVNMEMLGVFLVFFPTFINLIEFSQFIKTVPKPIWLCQENMREDDAIRHR.

An N-terminal signal peptide occupies residues 1 to 24; it reads MGSIQIIFAAYCVVLCVLQMLVLS. Topologically, residues 25 to 237 are extracellular; sequence SEQFTITGLE…ESISIVLTGD (213 aa). One can recognise an Ig-like V-type domain in the interval 26 to 141; sequence EQFTITGLER…EEHITEVKVT (116 aa). 2 cysteine pairs are disulfide-bonded: cysteine 49–cysteine 123 and cysteine 163–cysteine 217. An Ig-like C1-type domain is found at 142 to 231; sequence ATSSDIKIIM…LLTHQEESIS (90 aa). An N-linked (GlcNAc...) asparagine glycan is attached at asparagine 200. A helical transmembrane segment spans residues 238–258; it reads LFSWKIDWILILSIIACVMIP. Over 259 to 283 the chain is Cytoplasmic; the sequence is YSMTSYLQQHLIHGSCSQRSHHWRK. A helical transmembrane segment spans residues 284–304; it reads NAMVCMSSVIAIIGSMLILHL. Residues 305 to 324 lie on the Extracellular side of the membrane; that stretch reads KQRVPISDQHFELDTLYLED. The chain crosses the membrane as a helical span at residues 325–345; it reads ISVILCVVIVFNLKLNLLTYY. Residues 346–359 lie on the Cytoplasmic side of the membrane; it reads RLERKYDGCTPGCK. The chain crosses the membrane as a helical span at residues 360–380; sequence ACFYILKIIIIILPFVFTFGC. Topologically, residues 381–414 are extracellular; sequence YNAIFLKYHQLQKKVSIPDPLYYFYTSWLVNMEM. Residues 415–435 form a helical membrane-spanning segment; the sequence is LGVFLVFFPTFINLIEFSQFI. The Cytoplasmic portion of the chain corresponds to 436 to 458; that stretch reads KTVPKPIWLCQENMREDDAIRHR.

It belongs to the SKINT family. Expressed in skin and thymus.

Its subcellular location is the membrane. Its function is as follows. May act by engaging a cell surface molecule on immature T-cells in the embryonic thymus. This chain is Selection and upkeep of intraepithelial T-cells protein 3 (Skint3), found in Mus musculus (Mouse).